The following is a 269-amino-acid chain: MKKIATATIATAGFATIAIASGNQAHASEQDNYGYNPNDPTSYSYTYTIDAQGNYHYTWKGNWHPSQLNQDNGYYSYYYYNGYNNYNYNNYNNGYSYNNYSRYNNYSNNNQSYNYNNYNSYNTNSYRTGGLGASYSTSSNNVQVTTTMAPSSNGRSISSGYTSGRNLYTSGQCTYYVFDRVGGKIGSTWGNASNWANAAARAGYTVNNTPKAGAIMQTTQGAYGHVAYVESVNSNGSVRVSEMNYGYGPGVVTSRTISASQAAGYNFIH.

The N-terminal stretch at 1-27 is a signal peptide; it reads MKKIATATIATAGFATIAIASGNQAHA. 7 repeat units span residues 83 to 85, 88 to 90, 91 to 93, 97 to 99, 103 to 105, 106 to 108, and 115 to 117. The segment at 83 to 115 is 7 X 3 AA repeats of Y-[NS]-N; it reads YNNYNYNNYNNGYSYNNYSRYNNYSNNNQSYNY. A Peptidase C51 domain is found at 148–269; the sequence is MAPSSNGRSI…SQAAGYNFIH (122 aa).

It is found in the secreted. Not known; immunogenic protein. The chain is Staphylococcal secretory antigen ssaA2 (ssaA2) from Staphylococcus aureus (strain MSSA476).